The primary structure comprises 138 residues: ATP synthase epsilon chain (138 aa).

The protein belongs to the ATPase epsilon chain family. F-type ATPases have 2 components, CF(1) - the catalytic core - and CF(0) - the membrane proton channel. CF(1) has five subunits: alpha(3), beta(3), gamma(1), delta(1), epsilon(1). CF(0) has three main subunits: a, b and c.

It is found in the cell inner membrane. In terms of biological role, produces ATP from ADP in the presence of a proton gradient across the membrane. In Cupriavidus metallidurans (strain ATCC 43123 / DSM 2839 / NBRC 102507 / CH34) (Ralstonia metallidurans), this protein is ATP synthase epsilon chain.